The primary structure comprises 34 residues: uncharacterized protein (34 aa).

A helical transmembrane segment spans residues 10–30; it reads LIITSSFFAIAVVLVLSVLLI.

It is found in the membrane. This is an uncharacterized protein from Escherichia coli O157:H7.